The sequence spans 162 residues: Blue copper protein 1b (162 aa).

A signal peptide spans 1-23 (MASSRVVLILSISMVLLSSVAIA). A Phytocyanin domain is found at 25–125 (TDYIVGDDKG…QMKLVITVLA (101 aa)). His65 serves as a coordination point for Cu cation. Residue Asn71 is glycosylated (N-linked (GlcNAc...) asparagine). Cys78 and Cys112 are disulfide-bonded. Positions 106, 111, and 117 each coordinate Cu cation. A helical membrane pass occupies residues 142–162 (VVSSLFGVVMAIMVAIAVIFA).

The protein localises to the membrane. The sequence is that of Blue copper protein 1b from Medicago truncatula (Barrel medic).